Consider the following 118-residue polypeptide: Large ribosomal subunit protein uL24 (118 aa).

Belongs to the universal ribosomal protein uL24 family. In terms of assembly, part of the 50S ribosomal subunit.

Functionally, one of two assembly initiator proteins, it binds directly to the 5'-end of the 23S rRNA, where it nucleates assembly of the 50S subunit. In terms of biological role, one of the proteins that surrounds the polypeptide exit tunnel on the outside of the subunit. This Prochlorococcus marinus (strain SARG / CCMP1375 / SS120) protein is Large ribosomal subunit protein uL24.